A 153-amino-acid chain; its full sequence is Ribosome maturation factor RimP (153 aa).

The protein belongs to the RimP family.

The protein resides in the cytoplasm. Functionally, required for maturation of 30S ribosomal subunits. The sequence is that of Ribosome maturation factor RimP from Rippkaea orientalis (strain PCC 8801 / RF-1) (Cyanothece sp. (strain PCC 8801)).